The following is a 299-amino-acid chain: Pyridoxal 5'-phosphate synthase subunit PdxS (299 aa).

Asp24 provides a ligand contact to D-ribose 5-phosphate. Lys81 serves as the catalytic Schiff-base intermediate with D-ribose 5-phosphate. Gly153 contributes to the D-ribose 5-phosphate binding site. Residue Arg165 participates in D-glyceraldehyde 3-phosphate binding. D-ribose 5-phosphate-binding positions include Gly219 and Gly240–Ser241.

The protein belongs to the PdxS/SNZ family. In the presence of PdxT, forms a dodecamer of heterodimers.

It carries out the reaction aldehydo-D-ribose 5-phosphate + D-glyceraldehyde 3-phosphate + L-glutamine = pyridoxal 5'-phosphate + L-glutamate + phosphate + 3 H2O + H(+). Its pathway is cofactor biosynthesis; pyridoxal 5'-phosphate biosynthesis. In terms of biological role, catalyzes the formation of pyridoxal 5'-phosphate from ribose 5-phosphate (RBP), glyceraldehyde 3-phosphate (G3P) and ammonia. The ammonia is provided by the PdxT subunit. Can also use ribulose 5-phosphate and dihydroxyacetone phosphate as substrates, resulting from enzyme-catalyzed isomerization of RBP and G3P, respectively. The sequence is that of Pyridoxal 5'-phosphate synthase subunit PdxS from Methanococcus maripaludis (strain C7 / ATCC BAA-1331).